Consider the following 196-residue polypeptide: Guanylate kinase (196 aa).

Residues 7-191 form the Guanylate kinase-like domain; it reads RNIVLLVGPS…AAEEIEKIIL (185 aa). An ATP-binding site is contributed by 14 to 21; the sequence is GPSGVGKG.

Belongs to the guanylate kinase family.

It is found in the cytoplasm. The catalysed reaction is GMP + ATP = GDP + ADP. Essential for recycling GMP and indirectly, cGMP. The sequence is that of Guanylate kinase from Mycoplasmopsis pulmonis (strain UAB CTIP) (Mycoplasma pulmonis).